The chain runs to 183 residues: uncharacterized protein (183 aa).

A disordered region spans residues 136–183; sequence EPPASVPSKQSGRSDKKKSTRKSPTFRNRPDFRKNKGRQLNKTTKQKK. Over residues 170–183 the composition is skewed to basic residues; that stretch reads NKGRQLNKTTKQKK.

This is an uncharacterized protein from Homo sapiens (Human).